The sequence spans 228 residues: 2-C-methyl-D-erythritol 4-phosphate cytidylyltransferase (228 aa).

Belongs to the IspD/TarI cytidylyltransferase family. IspD subfamily.

It carries out the reaction 2-C-methyl-D-erythritol 4-phosphate + CTP + H(+) = 4-CDP-2-C-methyl-D-erythritol + diphosphate. It functions in the pathway isoprenoid biosynthesis; isopentenyl diphosphate biosynthesis via DXP pathway; isopentenyl diphosphate from 1-deoxy-D-xylulose 5-phosphate: step 2/6. Functionally, catalyzes the formation of 4-diphosphocytidyl-2-C-methyl-D-erythritol from CTP and 2-C-methyl-D-erythritol 4-phosphate (MEP). The protein is 2-C-methyl-D-erythritol 4-phosphate cytidylyltransferase of Halalkalibacterium halodurans (strain ATCC BAA-125 / DSM 18197 / FERM 7344 / JCM 9153 / C-125) (Bacillus halodurans).